An 839-amino-acid chain; its full sequence is Protein translocase subunit SecA (839 aa).

Residues Gln-86, Gly-104 to Thr-108, and Asp-493 each bind ATP. The interval Gly-794–Gln-839 is disordered. Basic and acidic residues predominate over residues Asp-807 to Lys-833.

This sequence belongs to the SecA family. In terms of assembly, monomer and homodimer. Part of the essential Sec protein translocation apparatus which comprises SecA, SecYEG and auxiliary proteins SecDF. Other proteins may also be involved.

The protein resides in the cell membrane. Its subcellular location is the cytoplasm. It carries out the reaction ATP + H2O + cellular proteinSide 1 = ADP + phosphate + cellular proteinSide 2.. Its function is as follows. Part of the Sec protein translocase complex. Interacts with the SecYEG preprotein conducting channel. Has a central role in coupling the hydrolysis of ATP to the transfer of proteins into and across the cell membrane, serving as an ATP-driven molecular motor driving the stepwise translocation of polypeptide chains across the membrane. The protein is Protein translocase subunit SecA of Brevibacillus brevis (strain 47 / JCM 6285 / NBRC 100599).